The following is a 117-amino-acid chain: Prefoldin subunit beta (117 aa).

This sequence belongs to the prefoldin subunit beta family. In terms of assembly, heterohexamer of two alpha and four beta subunits.

It is found in the cytoplasm. Molecular chaperone capable of stabilizing a range of proteins. Seems to fulfill an ATP-independent, HSP70-like function in archaeal de novo protein folding. This chain is Prefoldin subunit beta (pfdB), found in Pyrococcus abyssi (strain GE5 / Orsay).